An 806-amino-acid polypeptide reads, in one-letter code: DEP domain-containing protein 1A (806 aa).

The DEP domain occupies 24–108 (FRAAMPLRKH…DNNSLYRFPS (85 aa)). Residues 142–177 (QFSKKTPKRRASVDSKEEQENEDLMEDQRNDDDFPK) form a disordered region. Basic and acidic residues predominate over residues 167–177 (EDQRNDDDFPK). Residues 279 to 319 (DYFLNLPEPLLTFEFYELFVNILVVCGYITVPNSHNGKHRF) form the Rho-GAP domain. Residues 564-588 (SHSSFPSTSSLLPPTTSPNSTGSES) are disordered.

The chain is DEP domain-containing protein 1A (depdc1a) from Xenopus laevis (African clawed frog).